Here is a 122-residue protein sequence, read N- to C-terminus: Large ribosomal subunit protein uL14 (122 aa).

The protein belongs to the universal ribosomal protein uL14 family. In terms of assembly, part of the 50S ribosomal subunit. Forms a cluster with proteins L3 and L19. In the 70S ribosome, L14 and L19 interact and together make contacts with the 16S rRNA in bridges B5 and B8.

Its function is as follows. Binds to 23S rRNA. Forms part of two intersubunit bridges in the 70S ribosome. This chain is Large ribosomal subunit protein uL14, found in Pseudomonas aeruginosa (strain LESB58).